Reading from the N-terminus, the 211-residue chain is Protein N-terminal glutamine amidohydrolase (211 aa).

Catalysis depends on residues Cys-24, His-78, and Asp-94.

Belongs to the NTAQ1 family. As to quaternary structure, monomer.

The enzyme catalyses N-terminal L-glutaminyl-[protein] + H2O = N-terminal L-glutamyl-[protein] + NH4(+). Its function is as follows. Mediates the side-chain deamidation of N-terminal glutamine residues to glutamate, an important step in N-end rule pathway of protein degradation. Conversion of the resulting N-terminal glutamine to glutamate renders the protein susceptible to arginylation, polyubiquitination and degradation as specified by the N-end rule. Does not act on substrates with internal or C-terminal glutamine and does not act on non-glutamine residues in any position. The polypeptide is Protein N-terminal glutamine amidohydrolase (tun) (Anopheles gambiae (African malaria mosquito)).